Consider the following 442-residue polypeptide: Probable folate-biopterin transporter 7 (442 aa).

12 consecutive transmembrane segments (helical) span residues 23–43 (LGFGFFVQGFRGFPWLGANFF), 64–82 (LPMVAKPIYGVVSDSVYFF), 87–107 (IPYIAVGALLQAISWLAIAFL), 114–134 (ILALSIYLLLSNLGASLVEVA), 158–178 (FVWMVSSLGGILGNLLGGIAI), 184–204 (QSTFLVFGILALLQFLVTINI), 241–261 (IAWIAVSTAVVPVLTGTMFFY), 270–290 (ASLLGISKVFGQIAMLLWGFA), 302–322 (KLLTAIQVTIAFFVISDLLFV), 335–355 (VYVLFFSGFLETLFYFKILPF), 379–399 (IALAFIVSGYLGIVLASFVGV), and 410–430 (GLAIEACCVGIPLILTSWIYD).

This sequence belongs to the major facilitator superfamily. Folate-biopterin transporter (TC 2.A.71) family.

Its subcellular location is the membrane. Functionally, could mediate folate transport. The chain is Probable folate-biopterin transporter 7 from Arabidopsis thaliana (Mouse-ear cress).